A 324-amino-acid chain; its full sequence is Fibronectin type III domain-containing protein 8 (324 aa).

The Fibronectin type-III domain maps to 179 to 280 (PDTPFIFEHT…KPYKFATLAT (102 aa)).

The chain is Fibronectin type III domain-containing protein 8 (FNDC8) from Homo sapiens (Human).